The following is a 103-amino-acid chain: Secreted LysM effector Mgx1LysM (103 aa).

Positions 1 to 18 are cleaved as a signal peptide; sequence MKVTTIIAALLSVAVVDA. 2 disulfides stabilise this stretch: Cys-31/Cys-89 and Cys-62/Cys-97. Residues 37–85 form the LysM domain; the sequence is IPYVVKKGDTLTHIAHDIYKRKVGICDLAYTNHIGYNPDLIYEDQTLLI. Chitin is bound by residues Gly-44, Thr-48, Asp-75, and Ile-77.

The protein belongs to the secreted LysM effector family. Forms homodimers in a chitin-independent manner through interactions at the N-termini of Mgx1LysM monomers. Homodimers are further polymerized in a chitin-dependent manner.

The protein localises to the secreted. It localises to the cell wall. Its function is as follows. Secreted effector that enables the plant pathogenic fungus to manipulate host defenses for successful infection. Binds chitin and suppresses the chitin-induced reactive oxygen species (ROS) burst. Chitin-induced polymerization of homodimers forms a contiguous Mg1LysM highly oligomeric super-complexe that is anchored to the chitin in the fungal cell wall to prevent hydrolysis by host chitinases. This chain is Secreted LysM effector Mgx1LysM, found in Zymoseptoria tritici (strain CBS 115943 / IPO323) (Speckled leaf blotch fungus).